The sequence spans 411 residues: Arginine deiminase (411 aa).

The Amidino-cysteine intermediate role is filled by cysteine 401.

It belongs to the arginine deiminase family.

The protein resides in the cytoplasm. It catalyses the reaction L-arginine + H2O = L-citrulline + NH4(+). Its pathway is amino-acid degradation; L-arginine degradation via ADI pathway; carbamoyl phosphate from L-arginine: step 1/2. This chain is Arginine deiminase, found in Streptococcus pyogenes serotype M2 (strain MGAS10270).